The chain runs to 90 residues: Probable Fe(2+)-trafficking protein (90 aa).

This sequence belongs to the Fe(2+)-trafficking protein family.

Could be a mediator in iron transactions between iron acquisition and iron-requiring processes, such as synthesis and/or repair of Fe-S clusters in biosynthetic enzymes. In Aliivibrio salmonicida (strain LFI1238) (Vibrio salmonicida (strain LFI1238)), this protein is Probable Fe(2+)-trafficking protein.